Consider the following 212-residue polypeptide: ER lumen protein-retaining receptor 1 (212 aa).

Residues 1–4 (MNLF) are Lumenal-facing. The chain crosses the membrane as a helical span at residues 5–24 (RFLGDLSHLLAIILLLLKIW). Over 25–32 (KSRSCAGI) the chain is Cytoplasmic. Residues 33–52 (SGKSQVLFAVVFTARYLDLF) form a helical membrane-spanning segment. Residues 47–48 (RY) are interaction with the K-D-E-L motif on target proteins. Over 53–58 (TNYISL) the chain is Lumenal. Residues 59–79 (YNTCMKVVYIACSFTTVWMIY) form a helical membrane-spanning segment. Residues 80–92 (SKFKATYDGNHDT) lie on the Cytoplasmic side of the membrane. The helical transmembrane segment at 93 to 110 (FRVEFLVVPTAVLAFLVN) threads the bilayer. At 111–116 (HDFTPL) the chain is on the lumenal side. Residues 117–135 (EILWTFSIYLESVAILPQL) form a helical membrane-spanning segment. The Cytoplasmic portion of the chain corresponds to 136–149 (FMVSKTGEAETITS). The chain crosses the membrane as a helical span at residues 150–168 (HYLFALGVYRTLYLFNWIW). The interval 159-169 (RTLYLFNWIWR) is interaction with the K-D-E-L motif on target proteins. Topologically, residues 169 to 178 (RYHFEGFFDL) are lumenal. The chain crosses the membrane as a helical span at residues 179–199 (IAIVAGLVQTVLYCDFFYLYI). Residues 200–212 (TKVLKGKKLSLPA) are Cytoplasmic-facing. Positions 204–207 (KGKK) are important for recycling of cargo proteins with the sequence motif K-D-E-L from the Golgi to the endoplasmic reticulum. Position 209 is a phosphoserine; by PKA (Ser209).

Belongs to the ERD2 family. Upon ligand binding the receptor oligomerizes and interacts with components of the transport machinery such as ARFGAP1 and ARF1. Post-translationally, phosphorylation by PKA at Ser-209 is required for endoplasmic reticulum retention function.

Its subcellular location is the golgi apparatus membrane. It is found in the cytoplasmic vesicle. It localises to the COPI-coated vesicle membrane. The protein localises to the endoplasmic reticulum membrane. The protein resides in the endoplasmic reticulum-Golgi intermediate compartment membrane. Receptor for the C-terminal sequence motif K-D-E-L that is present on endoplasmic reticulum resident proteins and that mediates their recycling from the Golgi back to the endoplasmic reticulum. In Rattus norvegicus (Rat), this protein is ER lumen protein-retaining receptor 1 (Kdelr1).